The sequence spans 804 residues: Exocyst complex component 6 (804 aa).

This sequence belongs to the SEC15 family. In terms of assembly, the exocyst complex is composed of EXOC1, EXOC2, EXOC3, EXOC4, EXOC5, EXOC6, EXOC7 and EXOC8. Interacts with CNTRL. Interacts with RAB11A in a GTP-dependent manner.

It is found in the cytoplasm. The protein resides in the perinuclear region. It localises to the cell projection. Its subcellular location is the growth cone. The protein localises to the midbody. It is found in the midbody ring. In terms of biological role, component of the exocyst complex involved in the docking of exocytic vesicles with fusion sites on the plasma membrane. Together with RAB11A, RAB3IP, RAB8A, PARD3, PRKCI, ANXA2, CDC42 and DNMBP promotes transcytosis of PODXL to the apical membrane initiation sites (AMIS), apical surface formation and lumenogenesis. In Rattus norvegicus (Rat), this protein is Exocyst complex component 6 (Exoc6).